The sequence spans 853 residues: DNA mismatch repair protein MutS (853 aa).

614 to 621 (GPNMGGKS) is an ATP binding site.

It belongs to the DNA mismatch repair MutS family.

This protein is involved in the repair of mismatches in DNA. It is possible that it carries out the mismatch recognition step. This protein has a weak ATPase activity. This is DNA mismatch repair protein MutS from Escherichia coli (strain K12 / MC4100 / BW2952).